The sequence spans 107 residues: Thiosulfate sulfurtransferase GlpE (107 aa).

The region spanning 19–107 (QDLNAVLVDI…WHKAGLPVEK (89 aa)) is the Rhodanese domain. Cys67 serves as the catalytic Cysteine persulfide intermediate.

This sequence belongs to the GlpE family.

The protein resides in the cytoplasm. The catalysed reaction is thiosulfate + hydrogen cyanide = thiocyanate + sulfite + 2 H(+). The enzyme catalyses thiosulfate + [thioredoxin]-dithiol = [thioredoxin]-disulfide + hydrogen sulfide + sulfite + 2 H(+). Its function is as follows. Transferase that catalyzes the transfer of sulfur from thiosulfate to thiophilic acceptors such as cyanide or dithiols. May function in a CysM-independent thiosulfate assimilation pathway by catalyzing the conversion of thiosulfate to sulfite, which can then be used for L-cysteine biosynthesis. This chain is Thiosulfate sulfurtransferase GlpE, found in Aliivibrio fischeri (strain MJ11) (Vibrio fischeri).